A 482-amino-acid polypeptide reads, in one-letter code: GTPase Der (482 aa).

2 EngA-type G domains span residues 3–166 (PVVA…SEQF) and 195–368 (IKLA…NSAT). GTP is bound by residues 9–16 (GRPNVGKS), 56–60 (DTGGI), 118–121 (NKVD), 201–208 (GKPNVGKS), 248–252 (DTAGV), and 313–316 (NKWD). One can recognise a KH-like domain in the interval 369-453 (KRINTSMLTR…PIKVEFREGA (85 aa)).

Belongs to the TRAFAC class TrmE-Era-EngA-EngB-Septin-like GTPase superfamily. EngA (Der) GTPase family. Associates with the 50S ribosomal subunit.

Functionally, GTPase that plays an essential role in the late steps of ribosome biogenesis. The protein is GTPase Der of Pseudoalteromonas atlantica (strain T6c / ATCC BAA-1087).